We begin with the raw amino-acid sequence, 203 residues long: Small ribosomal subunit protein uS5 (203 aa).

A compositionally biased stretch (basic and acidic residues) spans M1 to G25. The segment at M1–Q36 is disordered. The S5 DRBM domain occupies Q36 to V99.

This sequence belongs to the universal ribosomal protein uS5 family. In terms of assembly, part of the 30S ribosomal subunit. Contacts proteins S4 and S8.

Its function is as follows. With S4 and S12 plays an important role in translational accuracy. In terms of biological role, located at the back of the 30S subunit body where it stabilizes the conformation of the head with respect to the body. The chain is Small ribosomal subunit protein uS5 from Saccharopolyspora erythraea (strain ATCC 11635 / DSM 40517 / JCM 4748 / NBRC 13426 / NCIMB 8594 / NRRL 2338).